The following is a 458-amino-acid chain: MNFPTIPHESNVVSINVGGRIFQTTKQTLSLAGTDSLLSQLATETTRFVDRDPDLFSVLLYILRTGNLPARSRAFDVRDLIDESRYYGIESFLIDSLSNSSQFEPFDLRRSRILQLNGRDSPSSISPTVIGGGLHVAHGSKITSFDWSLRQKSTVLTNFSAVDSLLEISPGVLAAGATDFPGLQIIDLDNGGFVRTTLNWENVTRSSSTVQAIGSSHEFLFTSFESSRRNSNSIMVYDLSSLLPVSEIDHCEIYGADIDSAIPSTKLKWIQSCNLLMVSGSHTSPSGVNGHIRFWDVRSRNMVWEIKEAQDCFSDVTVSDNLSAVFKVGVTSGEVFYADLRSLGTKDPWVCLGEEKKRNLNERRGVGSKIESYGNHVFCSSKGSGIELWSEVITGLVGNASRDVLEERVFRKNSLGKLADSGENKITGLAFGGNRMFVTRKDQQSVQVWQSPSRGISI.

A BTB domain is found at 11–72 (NVVSINVGGR…LRTGNLPARS (62 aa)). 3 WD repeats span residues 259–305 (DSAI…MVWE), 360–399 (LNER…LVGN), and 421–458 (SGEN…GISI).

It functions in the pathway protein modification; protein ubiquitination. May act as a substrate-specific adapter of an E3 ubiquitin-protein ligase complex (CUL3-RBX1-BTB) which mediates the ubiquitination and subsequent proteasomal degradation of target proteins. This chain is BTB/POZ domain-containing protein At5g41330, found in Arabidopsis thaliana (Mouse-ear cress).